Here is an 844-residue protein sequence, read N- to C-terminus: Saxiphilin (844 aa).

The first 19 residues, 1–19 (MAPTFQTALFFTIISLSFA), serve as a signal peptide directing secretion. Positions 26-106 (VRWCAISDLE…IAEPYSSNRD (81 aa)) constitute a Transferrin-like 1; first part domain. Cystine bridges form between Cys-29–Cys-64, Cys-39–Cys-55, Cys-110–Cys-130, Cys-141–Cys-148, Cys-150–Cys-172, Cys-180–Cys-202, Cys-222–Cys-244, Cys-277–Cys-360, Cys-322–Cys-335, Cys-332–Cys-343, Cys-388–Cys-402, Cys-495–Cys-527, Cys-505–Cys-518, Cys-552–Cys-839, Cys-570–Cys-799, Cys-607–Cys-685, Cys-641–Cys-655, Cys-652–Cys-668, and Cys-725–Cys-739. 2 Thyroglobulin type-1 domains span residues 107–172 (LQKC…RATC) and 177–244 (LPKC…PATC). Positions 109–249 (KCLKERQQAL…IPATCQKHDL (141 aa)) are absent in transferrins. One can recognise a Transferrin-like 1; second part domain in the interval 245–482 (QKHDLVTTCH…LFHAMKALTG (238 aa)). Residues 492 to 828 (VRWCTINKLE…YYTTVYGASR (337 aa)) enclose the Transferrin-like 2 domain.

It belongs to the transferrin family. As to quaternary structure, monomer. In terms of tissue distribution, plasma. Highest levels of transcripts found in the liver, the lung, the pancreas and the brain.

It is found in the secreted. Binds specifically to the neurotoxin saxitoxin. Its physiological role may be to transport or sequester an endogenous organic molecule other than Fe(3+). It may participate in a detoxification mechanism for neutralizing a microbial toxin. The protein is Saxiphilin of Aquarana catesbeiana (American bullfrog).